The chain runs to 329 residues: Transmembrane protein I329L (329 aa).

Residues 1–31 (MLRVFIFFVFLGSGLTGRIKPQVTCKYFISE) form the signal peptide. Asparagine 32, asparagine 39, asparagine 44, asparagine 76, asparagine 82, and asparagine 101 each carry an N-linked (GlcNAc...) asparagine; by host glycan. At 32 to 239 (NNTWYKYNVT…NTERYKSCYP (208 aa)) the chain is on the extracellular side. An LRR repeat occupies 112 to 133 (ELKFLDLRYNDLQVIDYNILRK). Residues asparagine 185 and asparagine 219 are each glycosylated (N-linked (GlcNAc...) asparagine; by host). Cysteine 195 and cysteine 237 are joined by a disulfide. A helical transmembrane segment spans residues 240–260 (LVFISILCSCISFLFLFICLL). Residues 261–329 (RSICKKYSCT…EKKVSCSRRK (69 aa)) are Cytoplasmic-facing.

This sequence belongs to the asfivirus I329L family. In terms of processing, highly glycosylated.

It localises to the host endoplasmic reticulum membrane. It is found in the host Golgi apparatus membrane. Its function is as follows. Viral TLR3 homolog that probably prevents TLR3 dimerization and subsequent induction of IFN. Inhibits dsRNA-stimulated activation of NF-kB and IRF3. The chain is Transmembrane protein I329L from Ornithodoros (relapsing fever ticks).